The primary structure comprises 506 residues: Dolabradiene monooxygenase (506 aa).

The helical transmembrane segment at 5–25 (VLLAVAMVALIAVLSKLKSLL) threads the bilayer. Cysteine 443 is a binding site for heme.

Belongs to the cytochrome P450 family. The cofactor is heme.

The protein localises to the membrane. It carries out the reaction dolabradiene + reduced [NADPH--hemoprotein reductase] + O2 = 15,16-epoxydolabrene + oxidized [NADPH--hemoprotein reductase] + H2O + H(+). The catalysed reaction is 15,16-epoxydolabrene + reduced [NADPH--hemoprotein reductase] + O2 = 3beta-hydroxy-15,16-epoxydolabrene + oxidized [NADPH--hemoprotein reductase] + H2O + H(+). Involved in the production of antifungal dolabralexin phytoalexins in response to biotic and abiotic stresses. Catalyzes the epoxidation of dolabradiene at C-16, followed by hydroxylation at C-3, to yield the epoxides 15,16-epoxydolabrene (epoxydolabrene) and 3b-hydroxy-15,16-epoxydolabrene (epoxydolabranol). This chain is Dolabradiene monooxygenase, found in Zea mays (Maize).